A 262-amino-acid polypeptide reads, in one-letter code: Adenosylcobinamide-GDP ribazoletransferase (262 aa).

The next 6 helical transmembrane spans lie at 43–63 (YFGL…WLTQ), 66–86 (LPAG…TGGF), 120–140 (GALA…ELAL), 146–166 (AGSA…SIIF), 191–211 (LLIL…LAAL), and 242–262 (AAQQ…GNIL).

It belongs to the CobS family. Mg(2+) is required as a cofactor.

It is found in the cell inner membrane. It catalyses the reaction alpha-ribazole + adenosylcob(III)inamide-GDP = adenosylcob(III)alamin + GMP + H(+). It carries out the reaction alpha-ribazole 5'-phosphate + adenosylcob(III)inamide-GDP = adenosylcob(III)alamin 5'-phosphate + GMP + H(+). It functions in the pathway cofactor biosynthesis; adenosylcobalamin biosynthesis; adenosylcobalamin from cob(II)yrinate a,c-diamide: step 7/7. Joins adenosylcobinamide-GDP and alpha-ribazole to generate adenosylcobalamin (Ado-cobalamin). Also synthesizes adenosylcobalamin 5'-phosphate from adenosylcobinamide-GDP and alpha-ribazole 5'-phosphate. This is Adenosylcobinamide-GDP ribazoletransferase from Shewanella baltica (strain OS195).